Reading from the N-terminus, the 986-residue chain is MATYTSTIQIGSIECKLPYSPAPFGLVAGKREVSTTTDPFASLEMQLSARLRRQEFATIRTSKNGTCMYRYKTDAQIARIQKKREEREREEYNFQMAASSVVSKITIAGGEPPSKLESQVRKGVIHTTPRMRTAKTYRTPKLTEGQMNHLIKQVKQIMSTKGGSVQLISKKSTHVHYKEVLGSHRAVVCTAHMRGLRKRVDFRCDKWTVVRLQHLARTDKWTNQVRATDLRKGDSGVILSNTNLKGHFGRSSEGLFIVRGSHEGKIYDARSKVTQGVMDSMVQFSSAESFWEGLDGNWAQMRYPTDHTCVAGIPVEDCGRVAAIMTHSILPCYKITCPTCAQQYANLPASDLLKILHKHASDGLNRLGADKDRFVHVKKFLTILEHLTEPVDLSLEIFNEVFKSIGEKQQSPFKNLNILNNFFLKGKENTAREWQVAQLSLLELARFQKNRTDNIKKGDISFFRNKLSAKANWNLYLSCDNQLDKNANFLWGQREYHAKRFFSNYFEEIDPAKGYSAYENRLHPNGTRKLAIGNLIVPLDLAEFRRKMKGDYKRQPGVSKKCTSSKDGNYVYPCCCTTLDDGSAVESTFYPPTKKHLVIGNSGDQKYVDLPKGNSEMLYIARQGFCYINIFLAMLINISEEDAKDFTKKVRDMCVPKLGTWPTMMDLATTCAQMKIFYPDVHDAELPRILVDHETQTCHVVDSFGSQTTGYHILKASSVSQLILFANDELESDIKHYRVGGIPNACPELGSTISPFREGGVIMSESAALKLLLKGIFRPKVMRQLLLDEPYLLILSILSPGILMAMYNNGIFELAVKLWINEKQSIAMIASLLSALALRVSAAETLVAQRIIIDTAATDLLDATCDGFNLHLTYPTALMVLQVVKNRNECDDTLFKAGFPSYNTSVVQIMEKKLSKSLERCLERFNLAGKIIRNMVLIQSKTLYHSVHKTHRKGRFERVIQHITTSILGPRCPGGQRHCLRIERAI.

Positions 141 to 284 constitute a Peptidase S30 domain; sequence KLTEGQMNHL…QGVMDSMVQF (144 aa). Active-site for P1 proteinase activity residues include His192, Asp201, and Ser235. The short motif at 334–337 is the Involved in interaction with stylet and aphid transmission element; the sequence is KITC. Residues 592 to 594 carry the Involved in virions binding and aphid transmission motif; it reads PTK. The region spanning 618 to 740 is the Peptidase C6 domain; the sequence is LYIARQGFCY…ESDIKHYRVG (123 aa). Catalysis depends on for helper component proteinase activity residues Cys626 and His699.

The protein belongs to the potyviridae P3N-PIPO polyprotein family. Interacts (via PIPO domain) with host PCaP1 protein; this interaction may help to anchor the movement complex to the plasma membrane from which the complex could move to the plasmodesmata. In terms of processing, potyviral RNA is expressed as two polyproteins which undergo post-translational proteolytic processing. Genome polyprotein is processed by NIa-pro, P1 and HC-pro proteinases resulting in the production of at least ten individual proteins. P3N-PIPO is cleaved by P1 and HC-pro proteinases resulting in the production of three individual proteins. The P1 proteinase and the HC-pro cleave only their respective C-termini autocatalytically.

The protein localises to the host cell junction. Its subcellular location is the host plasmodesma. It carries out the reaction Hydrolyzes a Gly-|-Gly bond at its own C-terminus, commonly in the sequence -Tyr-Xaa-Val-Gly-|-Gly, in the processing of the potyviral polyprotein.. In terms of biological role, required for aphid transmission and also has proteolytic activity. Only cleaves a Gly-Gly dipeptide at its own C-terminus. Interacts with virions and aphid stylets. Acts as a suppressor of RNA-mediated gene silencing, also known as post-transcriptional gene silencing (PTGS), a mechanism of plant viral defense that limits the accumulation of viral RNAs. May have RNA-binding activity. Functionally, allows efficient cell to cell propagation, by bypassing the host cell wall barrier. Transports viral genome to neighboring plant cells directly through plasmosdesmata, without any budding. This chain is P3N-PIPO polyprotein, found in Capsicum (peppers).